The following is a 450-amino-acid chain: Chromosomal replication initiator protein DnaA 2 (450 aa).

Positions 1–87 are domain I, interacts with DnaA modulators; that stretch reads MLTCNECTTW…LEFVVAEHKK (87 aa). Residues 87 to 114 are domain II; the sequence is KPSAPVASQKESNEGISEVFEETKDFEL. The interval 115-330 is domain III, AAA+ region; the sequence is KLNLSYRFDN…GAINKLTAYC (216 aa). The ATP site is built by Gly-159, Gly-161, Lys-162, and Thr-163. The interval 331–450 is domain IV, binds dsDNA; sequence RLFGKSLTET…VNLCKNHIVG (120 aa).

It belongs to the DnaA family. In terms of assembly, oligomerizes as a right-handed, spiral filament on DNA at oriC.

It localises to the cytoplasm. Functionally, plays an essential role in the initiation and regulation of chromosomal replication. ATP-DnaA binds to the origin of replication (oriC) to initiate formation of the DNA replication initiation complex once per cell cycle. Binds the DnaA box (a 9 base pair repeat at the origin) and separates the double-stranded (ds)DNA. Forms a right-handed helical filament on oriC DNA; dsDNA binds to the exterior of the filament while single-stranded (ss)DNA is stabiized in the filament's interior. The ATP-DnaA-oriC complex binds and stabilizes one strand of the AT-rich DNA unwinding element (DUE), permitting loading of DNA polymerase. After initiation quickly degrades to an ADP-DnaA complex that is not apt for DNA replication. Binds acidic phospholipids. The polypeptide is Chromosomal replication initiator protein DnaA 2 (Chlamydia pneumoniae (Chlamydophila pneumoniae)).